The chain runs to 139 residues: Peptide methionine sulfoxide reductase MsrB (139 aa).

In terms of domain architecture, MsrB spans 9 to 131; that stretch reads TPSDNTELTE…NSASLSFIDD (123 aa). The Zn(2+) site is built by C48, C51, C97, and C100. Residue C120 is the Nucleophile of the active site.

This sequence belongs to the MsrB Met sulfoxide reductase family. Requires Zn(2+) as cofactor.

It catalyses the reaction L-methionyl-[protein] + [thioredoxin]-disulfide + H2O = L-methionyl-(R)-S-oxide-[protein] + [thioredoxin]-dithiol. The protein is Peptide methionine sulfoxide reductase MsrB of Pectobacterium carotovorum subsp. carotovorum (strain PC1).